The sequence spans 528 residues: 4-chlorobenzoate--CoA ligase (528 aa).

ATP-binding positions include 161 to 169 (TSGTTGLPK), 300 to 305 (NIYGTT), and Asn409.

Belongs to the ATP-dependent AMP-binding enzyme family. As to quaternary structure, homodimer. Mg(2+) is required as a cofactor.

The catalysed reaction is 4-chlorobenzoate + ATP + CoA = 4-chlorobenzoyl-CoA + AMP + diphosphate. It functions in the pathway xenobiotic degradation; 4-chlorobenzoate degradation; 4-hydroxybenzoate from 4-chlorobenzoate: step 2/3. With respect to regulation, unaffected by 5,5'-dithiobis-(2-nitrobenzoic acid), 4-chloromercuribenzoate and sodium azide. Inhibited by Cu(2+), Fe(2+) and Zn(2+). Unaffected by Na(+), K(+) and Li(+). Functionally, catalyzes the formation of chlorobenzoyl-CoA via a 2 step reaction. First 4-chlorobenzoyl is adenylated by ATP, followed by acyl transfer from the 4-chlorobenzoyl-AMP intermediate to CoA. Benzoate, 4-bromobenzoate, 4-iodobenzoate and 4-methylbenzoate also act as substrates. Inactive towards 4-aminobenzoate, 4-hydroxybenzoate, 2-aminobenzoate, 2,3-dihydroxybenzoate, 4-coumarate and the aliphatic carboxylic acids palmate, caproate, laurate and butyrate. Negligible activity is detected when ATP is replaced by UTP, CTP or GTP as cosubstrate. This is 4-chlorobenzoate--CoA ligase from Pseudomonas sp. (strain CBS-3).